Here is a 320-residue protein sequence, read N- to C-terminus: Olfactory receptor 2C3 (320 aa).

Residues 1-26 (MMEIANVSSPEVFVLLGFSTRPSLET) lie on the Extracellular side of the membrane. A glycan (N-linked (GlcNAc...) asparagine) is linked at asparagine 6. The helical transmembrane segment at 27–50 (VLFIVVLSFYMVSILGNGIIILVS) threads the bilayer. The Cytoplasmic segment spans residues 51 to 58 (HTDVHLHT). Residues 59–80 (PMYFFLANLPFLDMSFTTSIVP) form a helical membrane-spanning segment. Topologically, residues 81-101 (QLLANLWGPQKTISYGGCVVQ) are extracellular. The cysteines at positions 98 and 190 are disulfide-linked. The chain crosses the membrane as a helical span at residues 102 to 121 (FYISHWLGATECVLLATMSY). At 122 to 140 (DRYAAICRPLHYTVIMHPQ) the chain is on the cytoplasmic side. Residues 141–159 (LCLGLALASWLGGLTTSMV) traverse the membrane as a helical segment. Residues 160–196 (GSTLTMLLPLCGNNCIDHFFCEMPLIMQLACVDTSLN) lie on the Extracellular side of the membrane. The helical transmembrane segment at 197 to 220 (EMEMYLASFVFVVLPLGLILVSYG) threads the bilayer. Residues 221 to 237 (HIARAVLKIRSAEGRRK) lie on the Cytoplasmic side of the membrane. The chain crosses the membrane as a helical span at residues 238–260 (AFNTCSSHVAVVSLFYGSIIFMY). The Extracellular portion of the chain corresponds to 261–273 (LQPAKSTSHEQGK). A helical transmembrane segment spans residues 274 to 293 (FIALFYTVVTPALNPLIYTL). Residues 294-320 (RNTEVKSALRHMVLENCCGSAGKLAQI) lie on the Cytoplasmic side of the membrane.

This sequence belongs to the G-protein coupled receptor 1 family.

Its subcellular location is the cell membrane. Functionally, odorant receptor. The protein is Olfactory receptor 2C3 (OR2C3) of Homo sapiens (Human).